Consider the following 431-residue polypeptide: Tol-Pal system protein TolB (431 aa).

Positions 1-26 (MSLMTKLGFRALVASCLITAGSAANA) are cleaved as a signal peptide. Residues 411–431 (PQILSVQGGSVREPSWGPFMQ) form a disordered region.

It belongs to the TolB family. The Tol-Pal system is composed of five core proteins: the inner membrane proteins TolA, TolQ and TolR, the periplasmic protein TolB and the outer membrane protein Pal. They form a network linking the inner and outer membranes and the peptidoglycan layer.

It localises to the periplasm. Functionally, part of the Tol-Pal system, which plays a role in outer membrane invagination during cell division and is important for maintaining outer membrane integrity. This chain is Tol-Pal system protein TolB, found in Burkholderia lata (strain ATCC 17760 / DSM 23089 / LMG 22485 / NCIMB 9086 / R18194 / 383).